The primary structure comprises 251 residues: 5'-nucleotidase SurE (251 aa).

Positions 8, 9, 42, and 94 each coordinate a divalent metal cation.

This sequence belongs to the SurE nucleotidase family. It depends on a divalent metal cation as a cofactor.

Its subcellular location is the cytoplasm. It catalyses the reaction a ribonucleoside 5'-phosphate + H2O = a ribonucleoside + phosphate. In terms of biological role, nucleotidase that shows phosphatase activity on nucleoside 5'-monophosphates. The protein is 5'-nucleotidase SurE of Hydrogenovibrio crunogenus (strain DSM 25203 / XCL-2) (Thiomicrospira crunogena).